A 1072-amino-acid chain; its full sequence is Isoleucine--tRNA ligase, cytoplasmic (1072 aa).

A 'HIGH' region motif is present at residues 47 to 57 (PFATGTPHYGH). Lys486 is covalently cross-linked (Glycyl lysine isopeptide (Lys-Gly) (interchain with G-Cter in ubiquitin)). The 'KMSKS' region signature appears at 602-606 (KMSKS). ATP is bound at residue Lys605. A phosphoserine mark is found at Ser829 and Ser1059.

Belongs to the class-I aminoacyl-tRNA synthetase family.

The protein localises to the cytoplasm. The enzyme catalyses tRNA(Ile) + L-isoleucine + ATP = L-isoleucyl-tRNA(Ile) + AMP + diphosphate. The sequence is that of Isoleucine--tRNA ligase, cytoplasmic (ILS1) from Saccharomyces cerevisiae (strain ATCC 204508 / S288c) (Baker's yeast).